The sequence spans 157 residues: uncharacterized protein (157 aa).

This is an uncharacterized protein from Caenorhabditis elegans.